A 127-amino-acid polypeptide reads, in one-letter code: Glycine cleavage system H protein 1 (127 aa).

The region spanning 20–101 (LLTVGITAYA…LGEAWFFRFR (82 aa)) is the Lipoyl-binding domain. Residue Lys-60 is modified to N6-lipoyllysine.

Belongs to the GcvH family. In terms of assembly, the glycine cleavage system is composed of four proteins: P, T, L and H. The cofactor is (R)-lipoate.

Functionally, the glycine cleavage system catalyzes the degradation of glycine. The H protein shuttles the methylamine group of glycine from the P protein to the T protein. The polypeptide is Glycine cleavage system H protein 1 (Pseudomonas aeruginosa (strain ATCC 15692 / DSM 22644 / CIP 104116 / JCM 14847 / LMG 12228 / 1C / PRS 101 / PAO1)).